The following is a 117-amino-acid chain: Mediator of RNA polymerase II transcription subunit 11 (117 aa).

The residue at position 2 (Ala2) is an N-acetylalanine.

Belongs to the Mediator complex subunit 11 family. In terms of assembly, component of the Mediator complex, which is composed of MED1, MED4, MED6, MED7, MED8, MED9, MED10, MED11, MED12, MED13, MED13L, MED14, MED15, MED16, MED17, MED18, MED19, MED20, MED21, MED22, MED23, MED24, MED25, MED26, MED27, MED29, MED30, MED31, CCNC, CDK8 and CDC2L6/CDK11. The MED12, MED13, CCNC and CDK8 subunits form a distinct module termed the CDK8 module. Mediator containing the CDK8 module is less active than Mediator lacking this module in supporting transcriptional activation. Individual preparations of the Mediator complex lacking one or more distinct subunits have been variously termed ARC, CRSP, DRIP, PC2, SMCC and TRAP. Expressed in cochlea.

It is found in the nucleus. Component of the Mediator complex, a coactivator involved in the regulated transcription of nearly all RNA polymerase II-dependent genes. Mediator functions as a bridge to convey information from gene-specific regulatory proteins to the basal RNA polymerase II transcription machinery. Mediator is recruited to promoters by direct interactions with regulatory proteins and serves as a scaffold for the assembly of a functional pre-initiation complex with RNA polymerase II and the general transcription factors. The polypeptide is Mediator of RNA polymerase II transcription subunit 11 (Med11) (Mus musculus (Mouse)).